We begin with the raw amino-acid sequence, 261 residues long: tRNA pseudouridine synthase A 2 (261 aa).

The active-site Nucleophile is Asp-59. Tyr-117 is a binding site for substrate.

The protein belongs to the tRNA pseudouridine synthase TruA family. Homodimer.

The catalysed reaction is uridine(38/39/40) in tRNA = pseudouridine(38/39/40) in tRNA. Formation of pseudouridine at positions 38, 39 and 40 in the anticodon stem and loop of transfer RNAs. The polypeptide is tRNA pseudouridine synthase A 2 (Desulfotalea psychrophila (strain LSv54 / DSM 12343)).